We begin with the raw amino-acid sequence, 907 residues long: Translation initiation factor IF-2 (907 aa).

Basic and acidic residues-rich tracts occupy residues 223-235, 251-263, and 270-281; these read LAQRRQEEAKRAA, VAKEAPKPEEKNA, and GGKDWNDSDGKK. The tract at residues 223 to 320 is disordered; the sequence is LAQRRQEEAK…ENQQHAFTAP (98 aa). The region spanning 407-576 is the tr-type G domain; sequence PRPPVVTVMG…LLQAEVLELK (170 aa). The G1 stretch occupies residues 416 to 423; the sequence is GHVDHGKT. 416–423 contributes to the GTP binding site; it reads GHVDHGKT. Residues 441–445 form a G2 region; that stretch reads GITQH. Positions 462–465 are G3; the sequence is DTPG. Residues 462-466 and 516-519 each bind GTP; these read DTPGH and NKID. A G4 region spans residues 516–519; it reads NKID. The tract at residues 552 to 554 is G5; that stretch reads SAK.

It belongs to the TRAFAC class translation factor GTPase superfamily. Classic translation factor GTPase family. IF-2 subfamily.

Its subcellular location is the cytoplasm. In terms of biological role, one of the essential components for the initiation of protein synthesis. Protects formylmethionyl-tRNA from spontaneous hydrolysis and promotes its binding to the 30S ribosomal subunits. Also involved in the hydrolysis of GTP during the formation of the 70S ribosomal complex. This is Translation initiation factor IF-2 from Methylobacillus flagellatus (strain ATCC 51484 / DSM 6875 / VKM B-1610 / KT).